The following is a 624-amino-acid chain: Glucoamylase (624 aa).

Positions 1-18 are cleaved as a signal peptide; it reads MRQFLALAAAASIAVADS. The CBM21 domain maps to 26-132; sequence NSPPDDKAVA…NSQQLNVQVE (107 aa). Asparagine 54, asparagine 70, asparagine 98, asparagine 111, asparagine 168, asparagine 267, and asparagine 333 each carry an N-linked (GlcNAc...) asparagine glycan. Aspartate 340 functions as the Proton acceptor in the catalytic mechanism. Catalysis depends on glutamate 343, which acts as the Proton donor. 2 N-linked (GlcNAc...) asparagine glycosylation sites follow: asparagine 460 and asparagine 582.

It belongs to the glycosyl hydrolase 15 family.

It carries out the reaction Hydrolysis of terminal (1-&gt;4)-linked alpha-D-glucose residues successively from non-reducing ends of the chains with release of beta-D-glucose.. The polypeptide is Glucoamylase (GAA) (Blastobotrys adeninivorans (Yeast)).